Consider the following 75-residue polypeptide: Conotoxin Im23.5 (75 aa).

The first 23 residues, 1 to 23 (MKFFTCLLLLLVVLTVVFDNVDA), serve as a signal peptide directing secretion. 3 disulfides stabilise this stretch: Cys24–Cys28, Cys37–Cys40, and Cys41–Cys43. Positions 24–50 (CDRSCTGVMGHPSCATCCACFTSAGKR) are excised as a propeptide.

Expressed by the venom duct.

The protein localises to the secreted. Probable neurotoxin. The protein is Conotoxin Im23.5 of Conus imperialis (Imperial cone).